The sequence spans 105 residues: Thiosulfate sulfurtransferase GlpE (105 aa).

One can recognise a Rhodanese domain in the interval 15–103; sequence MQQGAILVDI…WCRAELPIDT (89 aa). The active-site Cysteine persulfide intermediate is Cys-63.

Belongs to the GlpE family.

It localises to the cytoplasm. The enzyme catalyses thiosulfate + hydrogen cyanide = thiocyanate + sulfite + 2 H(+). It catalyses the reaction thiosulfate + [thioredoxin]-dithiol = [thioredoxin]-disulfide + hydrogen sulfide + sulfite + 2 H(+). Functionally, transferase that catalyzes the transfer of sulfur from thiosulfate to thiophilic acceptors such as cyanide or dithiols. May function in a CysM-independent thiosulfate assimilation pathway by catalyzing the conversion of thiosulfate to sulfite, which can then be used for L-cysteine biosynthesis. This chain is Thiosulfate sulfurtransferase GlpE, found in Haemophilus influenzae (strain PittEE).